The chain runs to 274 residues: tRNA-cytidine(32) 2-sulfurtransferase (274 aa).

The short motif at 40 to 45 (SGGKDS) is the PP-loop motif element. Positions 115, 118, and 206 each coordinate [4Fe-4S] cluster.

It belongs to the TtcA family. In terms of assembly, homodimer. Requires Mg(2+) as cofactor. The cofactor is [4Fe-4S] cluster.

Its subcellular location is the cytoplasm. The catalysed reaction is cytidine(32) in tRNA + S-sulfanyl-L-cysteinyl-[cysteine desulfurase] + AH2 + ATP = 2-thiocytidine(32) in tRNA + L-cysteinyl-[cysteine desulfurase] + A + AMP + diphosphate + H(+). Its pathway is tRNA modification. Catalyzes the ATP-dependent 2-thiolation of cytidine in position 32 of tRNA, to form 2-thiocytidine (s(2)C32). The sulfur atoms are provided by the cysteine/cysteine desulfurase (IscS) system. The sequence is that of tRNA-cytidine(32) 2-sulfurtransferase from Pseudomonas syringae pv. tomato (strain ATCC BAA-871 / DC3000).